The primary structure comprises 990 residues: MLRLKSLKKPVQAVVRRFATTSAPTLSVGDNIHGFNVLRTKEIPEFDLQATLLEHSTGAQHLHIARDDSNNVFSIGFKTNPPDRTGVPHILEHTTLCGSEKYQVRDPFFKMLNRSLANFMNAMTAQDYTFYPFATTNATDMKNLRDVYLDATLKPLLRELDFSQEGWRLENEDSKDKTSPIILKGVVFNEMKGQMSNAAYAFYIRYLEKIYPSLNNSGGDPLVIPELTYEGLKKFHADHYNPSNAKTFSYGDISVADHLEALNAKFENCEISKTPGNTERLPLEFSSAAENTRIVEEGPIDTLLDTSKQHKMSMSWLMGSPKDIYESFCVKIISSLLIDGHSSPLHQKLIDSGLGSSYSPNTGLDSAPGANIFSVGLQGVTESDLTKVETVILDTIKTTVAEGFDKGRIDGLLHQTELARKDQNAKFGMALMNGVLPGWFNQVDPLEALEWNSVLDRFNKDMEADPEFLQKVMKKYLLDNKYFHFQMNPNPDYEKNVQEKEDEILTDKLAKLTESDKEEIFETGANLEKMQEEPENLDCLPTLHVSDIPRSKPRVALEHTKNPYPIQWRLAPTNGLTYFHSISSLEGLPHEYYPFLPLFTSSLTFLGTKDKTMGQLEDEIKLNTGGLDFSVSCSSSPLSLPSSQLNFAMDGVALDKNVETMFGLFQELLRNTDFTNVEKLKTMIAASTANLSNALAQSGHSFAMLRAASDISPVKKIDDILGGVAQVRFLSELAAKSEQQLVDEVIPKLQEIAKFALTREQRFAVTCGQDMQTKNDELVRKFAESFETNESPFNISSLSIPMTTPTSTLFKLPFQVNYAGIAIPGVPYTHADGAPLQVLANMLTHKHLHREIREKGGAYGGGASYNPTDGFFSYYSYRDPNLERTLQTCQEAGEWSVKKDWSSSDLQEAKLSLFQRIDAPISVKSEGMALYANGLTYEQREKRRRQLLDVAVDDVKRVAKQYLVNPSGYSVAALGPGYETMDKKKWTVLE.

The transit peptide at Met1–Thr25 directs the protein to the mitochondrion. His89 lines the Zn(2+) pocket. Glu92 functions as the Proton acceptor in the catalytic mechanism. His93 is a Zn(2+) binding site. Glu165 is a catalytic residue. Glu190 serves as a coordination point for Zn(2+).

This sequence belongs to the peptidase M16 family. PreP subfamily. As to quaternary structure, monomer and homodimer; homodimerization is induced by binding of the substrate. Zn(2+) serves as cofactor.

Its subcellular location is the mitochondrion intermembrane space. The protein localises to the mitochondrion matrix. In terms of biological role, degrades mitochondrial transit peptides after their cleavage in the intermembrane space or in the matrix, and presequence peptides; clearance of these peptides is required to keep the presequence processing machinery running. Preferentially cleaves the N-terminal side of paired basic amino acid residues. Also degrades other unstructured peptides. May function as an ATP-dependent peptidase as opposed to a metalloendopeptidase. The chain is Presequence protease, mitochondrial (CYM1) from Yarrowia lipolytica (strain CLIB 122 / E 150) (Yeast).